The primary structure comprises 102 residues: Small ribosomal subunit protein uS10 (102 aa).

This sequence belongs to the universal ribosomal protein uS10 family. As to quaternary structure, part of the 30S ribosomal subunit.

Functionally, involved in the binding of tRNA to the ribosomes. This Streptococcus thermophilus (strain ATCC BAA-250 / LMG 18311) protein is Small ribosomal subunit protein uS10.